The following is a 292-amino-acid chain: Phosphoribulokinase, plasmid (292 aa).

12-20 (GSSGAGTTS) serves as a coordination point for ATP.

It belongs to the phosphoribulokinase family. In terms of assembly, homooctamer.

It carries out the reaction D-ribulose 5-phosphate + ATP = D-ribulose 1,5-bisphosphate + ADP + H(+). It participates in carbohydrate biosynthesis; Calvin cycle. The protein is Phosphoribulokinase, plasmid (cfxP) of Cupriavidus necator (strain ATCC 17699 / DSM 428 / KCTC 22496 / NCIMB 10442 / H16 / Stanier 337) (Ralstonia eutropha).